A 264-amino-acid chain; its full sequence is Thymidylate synthase (264 aa).

Arg21 provides a ligand contact to dUMP. His51 provides a ligand contact to (6R)-5,10-methylene-5,6,7,8-tetrahydrofolate. 126–127 (RR) provides a ligand contact to dUMP. Residue Cys146 is the Nucleophile of the active site. DUMP is bound by residues 166–169 (RSAD), Asn177, and 207–209 (HIY). Asp169 provides a ligand contact to (6R)-5,10-methylene-5,6,7,8-tetrahydrofolate. Ala263 is a binding site for (6R)-5,10-methylene-5,6,7,8-tetrahydrofolate.

Belongs to the thymidylate synthase family. Bacterial-type ThyA subfamily. Homodimer.

Its subcellular location is the cytoplasm. The enzyme catalyses dUMP + (6R)-5,10-methylene-5,6,7,8-tetrahydrofolate = 7,8-dihydrofolate + dTMP. The protein operates within pyrimidine metabolism; dTTP biosynthesis. Functionally, catalyzes the reductive methylation of 2'-deoxyuridine-5'-monophosphate (dUMP) to 2'-deoxythymidine-5'-monophosphate (dTMP) while utilizing 5,10-methylenetetrahydrofolate (mTHF) as the methyl donor and reductant in the reaction, yielding dihydrofolate (DHF) as a by-product. This enzymatic reaction provides an intracellular de novo source of dTMP, an essential precursor for DNA biosynthesis. The sequence is that of Thymidylate synthase from Ruminiclostridium cellulolyticum (strain ATCC 35319 / DSM 5812 / JCM 6584 / H10) (Clostridium cellulolyticum).